Consider the following 229-residue polypeptide: MKKIKIGLMGSAGRMGQEIAGVIEANPRCELVYAPLRGEKWDSKKAQAVDVWIDFTSPEALKDILKKASETKTPVVCGTTGFSKKEKELLKTYSKKIPVLWSSNMSLGVAVLNEALKAFSAISHFDFQIEEIHHNRKKDRPSGTAITLQENLEKAVDKKLPEALAIRGGGVFGVHKIFAMSDEEVLTFEHTALNRTVFAKGSVQAAEWLVKQKPGLYQIRDVLFGKSKK.

NAD(+)-binding positions include 10–15 (GSAGRM), 78–80 (GTT), and 102–105 (SSNM). H133 functions as the Proton donor/acceptor in the catalytic mechanism. H134 is a (S)-2,3,4,5-tetrahydrodipicolinate binding site. K137 (proton donor) is an active-site residue. Position 143–144 (143–144 (GT)) interacts with (S)-2,3,4,5-tetrahydrodipicolinate.

The protein belongs to the DapB family.

The protein localises to the cytoplasm. It catalyses the reaction (S)-2,3,4,5-tetrahydrodipicolinate + NAD(+) + H2O = (2S,4S)-4-hydroxy-2,3,4,5-tetrahydrodipicolinate + NADH + H(+). The enzyme catalyses (S)-2,3,4,5-tetrahydrodipicolinate + NADP(+) + H2O = (2S,4S)-4-hydroxy-2,3,4,5-tetrahydrodipicolinate + NADPH + H(+). Its pathway is amino-acid biosynthesis; L-lysine biosynthesis via DAP pathway; (S)-tetrahydrodipicolinate from L-aspartate: step 4/4. Functionally, catalyzes the conversion of 4-hydroxy-tetrahydrodipicolinate (HTPA) to tetrahydrodipicolinate. This is 4-hydroxy-tetrahydrodipicolinate reductase from Bdellovibrio bacteriovorus (strain ATCC 15356 / DSM 50701 / NCIMB 9529 / HD100).